A 183-amino-acid chain; its full sequence is Holliday junction branch migration complex subunit RuvA (183 aa).

The domain I stretch occupies residues 1-64; the sequence is MVVGIEGIIT…EDSNKFYGFL (64 aa). Residues 65–139 are domain II; sequence DKDEQKMFEM…DTKTKLENVS (75 aa). A region of interest (flexible linker) is located at residue Ser-139. Residues 139-183 are domain III; the sequence is SDDKSEALAALLTLGFKQEKIISVLASAQATGTSELIKEALKKLG.

Belongs to the RuvA family. Homotetramer. Forms an RuvA(8)-RuvB(12)-Holliday junction (HJ) complex. HJ DNA is sandwiched between 2 RuvA tetramers; dsDNA enters through RuvA and exits via RuvB. An RuvB hexamer assembles on each DNA strand where it exits the tetramer. Each RuvB hexamer is contacted by two RuvA subunits (via domain III) on 2 adjacent RuvB subunits; this complex drives branch migration. In the full resolvosome a probable DNA-RuvA(4)-RuvB(12)-RuvC(2) complex forms which resolves the HJ.

It is found in the cytoplasm. Functionally, the RuvA-RuvB-RuvC complex processes Holliday junction (HJ) DNA during genetic recombination and DNA repair, while the RuvA-RuvB complex plays an important role in the rescue of blocked DNA replication forks via replication fork reversal (RFR). RuvA specifically binds to HJ cruciform DNA, conferring on it an open structure. The RuvB hexamer acts as an ATP-dependent pump, pulling dsDNA into and through the RuvAB complex. HJ branch migration allows RuvC to scan DNA until it finds its consensus sequence, where it cleaves and resolves the cruciform DNA. The chain is Holliday junction branch migration complex subunit RuvA from Campylobacter jejuni subsp. jejuni serotype O:23/36 (strain 81-176).